Reading from the N-terminus, the 213-residue chain is A-type ATP synthase subunit D (213 aa).

This sequence belongs to the V-ATPase D subunit family. As to quaternary structure, has multiple subunits with at least A(3), B(3), C, D, E, F, H, I and proteolipid K(x).

The protein localises to the cell membrane. Component of the A-type ATP synthase that produces ATP from ADP in the presence of a proton gradient across the membrane. The protein is A-type ATP synthase subunit D of Saccharolobus islandicus (strain L.S.2.15 / Lassen #1) (Sulfolobus islandicus).